A 239-amino-acid polypeptide reads, in one-letter code: tRNA (guanine-N(1)-)-methyltransferase (239 aa).

S-adenosyl-L-methionine is bound by residues G109 and 128-133 (IGDYVL).

Belongs to the RNA methyltransferase TrmD family. As to quaternary structure, homodimer.

The protein resides in the cytoplasm. The enzyme catalyses guanosine(37) in tRNA + S-adenosyl-L-methionine = N(1)-methylguanosine(37) in tRNA + S-adenosyl-L-homocysteine + H(+). In terms of biological role, specifically methylates guanosine-37 in various tRNAs. This chain is tRNA (guanine-N(1)-)-methyltransferase, found in Thermus thermophilus (strain ATCC BAA-163 / DSM 7039 / HB27).